The chain runs to 213 residues: tRNA (guanine-N(7)-)-methyltransferase (213 aa).

Glu44, Glu69, Asn96, and Asp118 together coordinate S-adenosyl-L-methionine. Residue Asp118 is part of the active site. A substrate-binding site is contributed by Lys122. The segment at 124-129 is interaction with RNA; that stretch reads RHEKRR. Substrate is bound by residues Asp154 and 192 to 195; that span reads TEYE.

Belongs to the class I-like SAM-binding methyltransferase superfamily. TrmB family.

The enzyme catalyses guanosine(46) in tRNA + S-adenosyl-L-methionine = N(7)-methylguanosine(46) in tRNA + S-adenosyl-L-homocysteine. Its pathway is tRNA modification; N(7)-methylguanine-tRNA biosynthesis. In terms of biological role, catalyzes the formation of N(7)-methylguanine at position 46 (m7G46) in tRNA. The chain is tRNA (guanine-N(7)-)-methyltransferase from Latilactobacillus sakei subsp. sakei (strain 23K) (Lactobacillus sakei subsp. sakei).